A 478-amino-acid polypeptide reads, in one-letter code: 2,5-dioxopentanoate dehydrogenase (478 aa).

NADP(+)-binding positions include 148–149 (WN), 172–175 (KPAT), and 225–226 (GS). The Proton acceptor role is filled by Glu249. The Nucleophile role is filled by Cys283. Glu379 contributes to the NADP(+) binding site.

The protein belongs to the aldehyde dehydrogenase family. As to quaternary structure, homotetramer.

The catalysed reaction is 2,5-dioxopentanoate + NADP(+) + H2O = 2-oxoglutarate + NADPH + 2 H(+). In terms of biological role, 2,5-dioxopentanoate dehydrogenase involved in the degradation of pentoses such as D-arabinose or D-xylose, a major component of hemicelluloses such as xylan. Catalyzes the fifth reaction in the pentose utilization pathway through dehydratation of 2,5-dioxopentanoate into 2-oxoglutarate. Also shows dehydrogenase activity toward glycolaldehyde and DL-glyceraldehyde. The polypeptide is 2,5-dioxopentanoate dehydrogenase (Saccharolobus solfataricus (strain ATCC 35092 / DSM 1617 / JCM 11322 / P2) (Sulfolobus solfataricus)).